Consider the following 1113-residue polypeptide: Histone deacetylase 5 (1113 aa).

The interval 1-22 is disordered; sequence MNSPNESDGMSGREPSLGILPR. A Glycyl lysine isopeptide (Lys-Gly) (interchain with G-Cter in SUMO2) cross-link involves residue Lys-35. Disordered stretches follow at residues 39–63 and 187–272; these read PGAMPSSMGGGGGGSPSPVELRGAL and KEPT…SSPL. Positions 238 to 249 are enriched in basic and acidic residues; it reads DSRDDFPLRKTA. Position 250 is a phosphoserine; by AMPK, CaMK1, SIK1 and PKD/PRKD1 (Ser-250). A compositionally biased stretch (basic and acidic residues) spans 263–272; the sequence is KVAERRSSPL. Residue Thr-283 is modified to Phosphothreonine; by PKC. Positions 472–494 are disordered; it reads RTVGKLPRHRPLSRTQSSPLPQS. The span at 484-494 shows a compositional bias: low complexity; that stretch reads SRTQSSPLPQS. At Ser-488 the chain carries Phosphoserine; by AMPK, CaMK1, SIK1 and PKD/PRKD1. Lys-523 carries the post-translational modification N6-acetyllysine. The tract at residues 526–611 is disordered; the sequence is TKTGELSRQP…PDEGPDLEES (86 aa). The segment covering 571 to 610 has biased composition (acidic residues); that stretch reads STQEDLEEEEEEEEEEEEDCIQVKDEDGESGPDEGPDLEE. Ser-600 and Ser-650 each carry phosphoserine. Residues 675-1019 form a histone deacetylase region; sequence GVVYDTFMLK…VSALLSVELQ (345 aa). Zn(2+) contacts are provided by Cys-687, Cys-689, His-695, and Cys-772. The active site involves His-824. The Nuclear export signal motif lies at 1072 to 1113; the sequence is EEAETVSAMALLSVGAEQAQAVATQEHSPRPAEEPMEQEPAL. The interval 1088–1113 is disordered; that stretch reads EQAQAVATQEHSPRPAEEPMEQEPAL. Ser-1099 carries the post-translational modification Phosphoserine.

It belongs to the histone deacetylase family. HD type 2 subfamily. In terms of assembly, interacts with AHRR, BAHD1, BCOR, HDAC7, HDAC9, CTBP1, MEF2C, NCOR2, NRIP1, PHB2 and a 14-3-3 chaperone protein. Interacts with BCL6, DDIT3/CHOP, GRK5, KDM5B and MYOCD. Interacts with EP300 in the presence of TFAP2C. Interacts with ANKRA2. Interacts with CUL7 (as part of the 3M complex); negatively regulated by ANKRA2. Interacts with ZBTB7B; the interaction allows the recruitment of HDAC4 on CD8 loci for deacetylation and possible inhibition of CD8 genes expression. Interacts with RARA. Phosphorylated by AMPK, CaMK1, SIK1 and PRKD1 at Ser-250 and Ser-488. The phosphorylation is required for the export to the cytoplasm and inhibition. Phosphorylated by the PKC kinases PKN1 and PKN2, impairing nuclear import. Phosphorylated by GRK5, leading to nuclear export of HDAC5 and allowing MEF2-mediated transcription. Post-translationally, ubiquitinated. Polyubiquitination however does not lead to its degradation.

It localises to the nucleus. It is found in the cytoplasm. The catalysed reaction is N(6)-acetyl-L-lysyl-[histone] + H2O = L-lysyl-[histone] + acetate. Functionally, responsible for the deacetylation of lysine residues on the N-terminal part of the core histones (H2A, H2B, H3 and H4). Histone deacetylation gives a tag for epigenetic repression and plays an important role in transcriptional regulation, cell cycle progression and developmental events. Histone deacetylases act via the formation of large multiprotein complexes. Involved in muscle maturation by repressing transcription of myocyte enhancer MEF2C. During muscle differentiation, it shuttles into the cytoplasm, allowing the expression of myocyte enhancer factors. Serves as a corepressor of RARA and causes its deacetylation. In association with RARA, plays a role in the repression of microRNA-10a and thereby in the inflammatory response. This Mus musculus (Mouse) protein is Histone deacetylase 5 (Hdac5).